The sequence spans 79 residues: Protein NOI4 (79 aa).

The segment at 31-68 (KARDEKKTGGKPGSPGKSSEGHVKSGGGDPSKPQPKKW) is disordered. Residue serine 44 is modified to Phosphoserine.

Belongs to the RIN4 family. Proteolytic cleaved by P.syringae pv tomato AvrRpt2 after Gly-12; this cleavage is critical for subsequent proteasome-dependent elimination.

This Arabidopsis thaliana (Mouse-ear cress) protein is Protein NOI4.